Consider the following 843-residue polypeptide: Protein P (843 aa).

Positions 1–177 are terminal protein domain (TP); it reads MPLSYQHFRK…FCGSPYSWEQ (177 aa). Residues 178 to 346 are spacer; sequence ELQHGRLVFQ…YCLTHIVNLL (169 aa). Disordered regions lie at residues 224–273 and 288–316; these read GLQP…SSTS and HLST…RSQS. The segment covering 288–299 has biased composition (polar residues); the sequence is HLSTSKRQSSSG. Residues 347–690 are polymerase/reverse transcriptase domain (RT); the sequence is EDWGPCTEHG…YLNLYPVARQ (344 aa). One can recognise a Reverse transcriptase domain in the interval 357–600; sequence EHNIRIPRTP…YSLNFMGYVI (244 aa). Positions 429, 551, and 552 each coordinate Mg(2+).

It belongs to the hepadnaviridae P protein family.

The catalysed reaction is DNA(n) + a 2'-deoxyribonucleoside 5'-triphosphate = DNA(n+1) + diphosphate. It carries out the reaction Endonucleolytic cleavage to 5'-phosphomonoester.. With respect to regulation, activated by host HSP70 and HSP40 in vitro to be able to bind the epsilon loop of the pgRNA. Because deletion of the RNase H region renders the protein partly chaperone-independent, the chaperones may be needed indirectly to relieve occlusion of the RNA-binding site by this domain. Inhibited by several reverse-transcriptase inhibitors: Lamivudine, Adefovir and Entecavir. Its function is as follows. Multifunctional enzyme that converts the viral RNA genome into dsDNA in viral cytoplasmic capsids. This enzyme displays a DNA polymerase activity that can copy either DNA or RNA templates, and a ribonuclease H (RNase H) activity that cleaves the RNA strand of RNA-DNA heteroduplexes in a partially processive 3'- to 5'-endonucleasic mode. Neo-synthesized pregenomic RNA (pgRNA) are encapsidated together with the P protein, and reverse-transcribed inside the nucleocapsid. Initiation of reverse-transcription occurs first by binding the epsilon loop on the pgRNA genome, and is initiated by protein priming, thereby the 5'-end of (-)DNA is covalently linked to P protein. Partial (+)DNA is synthesized from the (-)DNA template and generates the relaxed circular DNA (RC-DNA) genome. After budding and infection, the RC-DNA migrates in the nucleus, and is converted into a plasmid-like covalently closed circular DNA (cccDNA). The activity of P protein does not seem to be necessary for cccDNA generation, and is presumably released from (+)DNA by host nuclear DNA repair machinery. In Homo sapiens (Human), this protein is Protein P.